The following is a 265-amino-acid chain: Small ribosomal subunit protein uS3 (265 aa).

The region spanning 43–111 is the KH type-2 domain; the sequence is IRTMLKTSLD…QIQLNILEVK (69 aa). The tract at residues 217-265 is disordered; that stretch reads AREQANQKSSRPERRNDRSDGRTGDRRTNAPRTAPAAEAAPVAAAGVEA. The span at 226-244 shows a compositional bias: basic and acidic residues; it reads SRPERRNDRSDGRTGDRRT. Over residues 250-265 the composition is skewed to low complexity; the sequence is APAAEAAPVAAAGVEA.

The protein belongs to the universal ribosomal protein uS3 family. Part of the 30S ribosomal subunit. Forms a tight complex with proteins S10 and S14.

Functionally, binds the lower part of the 30S subunit head. Binds mRNA in the 70S ribosome, positioning it for translation. The chain is Small ribosomal subunit protein uS3 from Clavibacter michiganensis subsp. michiganensis (strain NCPPB 382).